Consider the following 397-residue polypeptide: Argininosuccinate synthase (397 aa).

8–16 is a binding site for ATP; the sequence is AYSGGLDTS. Tyr87 contributes to the L-citrulline binding site. Gly117 contacts ATP. Residues Thr119, Asn123, and Asp124 each coordinate L-aspartate. Asn123 is a binding site for L-citrulline. L-citrulline is bound by residues Arg127, Ser175, Glu259, and Tyr271.

It belongs to the argininosuccinate synthase family. Type 1 subfamily. In terms of assembly, homotetramer.

It is found in the cytoplasm. The catalysed reaction is L-citrulline + L-aspartate + ATP = 2-(N(omega)-L-arginino)succinate + AMP + diphosphate + H(+). Its pathway is amino-acid biosynthesis; L-arginine biosynthesis; L-arginine from L-ornithine and carbamoyl phosphate: step 2/3. This chain is Argininosuccinate synthase, found in Streptomyces clavuligerus.